The primary structure comprises 466 residues: UDP-N-acetylmuramate--L-alanine ligase (466 aa).

119–125 (GTHGKTT) is a binding site for ATP.

The protein belongs to the MurCDEF family.

The protein localises to the cytoplasm. The enzyme catalyses UDP-N-acetyl-alpha-D-muramate + L-alanine + ATP = UDP-N-acetyl-alpha-D-muramoyl-L-alanine + ADP + phosphate + H(+). Its pathway is cell wall biogenesis; peptidoglycan biosynthesis. In terms of biological role, cell wall formation. This chain is UDP-N-acetylmuramate--L-alanine ligase, found in Cytophaga hutchinsonii (strain ATCC 33406 / DSM 1761 / CIP 103989 / NBRC 15051 / NCIMB 9469 / D465).